The chain runs to 205 residues: Proteasome subunit beta type-3 (205 aa).

This sequence belongs to the peptidase T1B family. The 26S proteasome consists of a 20S proteasome core and two 19S regulatory subunits. The 20S proteasome core is composed of 28 subunits that are arranged in four stacked rings, resulting in a barrel-shaped structure. The two end rings are each formed by seven alpha subunits, and the two central rings are each formed by seven beta subunits. The catalytic chamber with the active sites is on the inside of the barrel.

The protein resides in the cytoplasm. The protein localises to the nucleus. In terms of biological role, non-catalytic component of the proteasome, a multicatalytic proteinase complex which is characterized by its ability to cleave peptides with Arg, Phe, Tyr, Leu, and Glu adjacent to the leaving group at neutral or slightly basic pH. The proteasome has an ATP-dependent proteolytic activity. The polypeptide is Proteasome subunit beta type-3 (Drosophila melanogaster (Fruit fly)).